The primary structure comprises 179 residues: ATP synthase subunit delta (179 aa).

Belongs to the ATPase delta chain family. In terms of assembly, F-type ATPases have 2 components, F(1) - the catalytic core - and F(0) - the membrane proton channel. F(1) has five subunits: alpha(3), beta(3), gamma(1), delta(1), epsilon(1). F(0) has three main subunits: a(1), b(2) and c(10-14). The alpha and beta chains form an alternating ring which encloses part of the gamma chain. F(1) is attached to F(0) by a central stalk formed by the gamma and epsilon chains, while a peripheral stalk is formed by the delta and b chains.

The protein resides in the cell membrane. F(1)F(0) ATP synthase produces ATP from ADP in the presence of a proton or sodium gradient. F-type ATPases consist of two structural domains, F(1) containing the extramembraneous catalytic core and F(0) containing the membrane proton channel, linked together by a central stalk and a peripheral stalk. During catalysis, ATP synthesis in the catalytic domain of F(1) is coupled via a rotary mechanism of the central stalk subunits to proton translocation. In terms of biological role, this protein is part of the stalk that links CF(0) to CF(1). It either transmits conformational changes from CF(0) to CF(1) or is implicated in proton conduction. The protein is ATP synthase subunit delta of Clostridium botulinum (strain Loch Maree / Type A3).